The chain runs to 389 residues: Chitinase-3-like protein 1 (389 aa).

Positions 1–29 (MHTSTEARMGMRAALTGFAVLMLLQSCSA) are cleaved as a signal peptide. The 360-residue stretch at 30–389 (YKLVCYFTSW…LTNAIKDALA (360 aa)) folds into the GH18 domain. Residues C34 and C59 are joined by a disulfide bond. N-linked (GlcNAc...) asparagine glycosylation occurs at N68. Chitin-binding positions include 79 to 80 (EW), 106 to 109 (GGWK), Y150, and 213 to 216 (MTYD). The cysteines at positions 309 and 372 are disulfide-linked. An important for AKT1 activation and IL8 production region spans residues 333–347 (QWVGYEDKESVKNKV). W361 is a chitin binding site.

Belongs to the glycosyl hydrolase 18 family. Monomer. As to expression, detected in lung in pulmonary macrophages and alveolar type 2 cells and in bronchoalveolar lavage (BAL) fluids. Expressed in mammary tumor cells (at protein level). Expressed in lung. Not detected in non-inflammatory colon.

The protein localises to the secreted. Its subcellular location is the extracellular space. It is found in the cytoplasm. The protein resides in the endoplasmic reticulum. Its function is as follows. Carbohydrate-binding lectin with a preference for chitin. Has no chitinase activity. May play a role in tissue remodeling and in the capacity of cells to respond to and cope with changes in their environment. Plays a role in T-helper cell type 2 (Th2) inflammatory response and IL-13-induced inflammation, regulating allergen sensitization, inflammatory cell apoptosis, dendritic cell accumulation and M2 macrophage differentiation. Facilitates invasion of pathogenic enteric bacteria into colonic mucosa and lymphoid organs. Mediates activation of AKT1 signaling pathway and subsequent IL8 production in colonic epithelial cells. Regulates antibacterial responses in lung by contributing to macrophage bacterial killing, controlling bacterial dissemination and augmenting host tolerance. Also regulates hyperoxia-induced injury, inflammation and epithelial apoptosis in lung. The chain is Chitinase-3-like protein 1 (Chi3l1) from Mus musculus (Mouse).